Here is a 1141-residue protein sequence, read N- to C-terminus: Myosin-binding protein C, slow-type (1141 aa).

Residues 1–10 (MPEPTKKEEN) show a composition bias toward basic and acidic residues. Positions 1 to 51 (MPEPTKKEENEVPAPAPPPEEPSKEKEAGTTPAKDWTLVETPPGEEQAKQN) are disordered. Ig-like C2-type domains are found at residues 72–144 (GEDI…RCEV), 251–340 (SAAF…VREP), 341–431 (PIMV…VDLK), 432–520 (PLKI…HVID), and 522–619 (PKII…VVDF). At threonine 406 the chain carries Phosphothreonine. Serine 611 bears the Phosphoserine mark. 2 consecutive Fibronectin type-III domains span residues 622–721 (PPVA…TSPP) and 722–833 (TLLT…VKEI). The residue at position 798 (threonine 798) is a Phosphothreonine. Position 823 is a phosphotyrosine (tyrosine 823). The 95-residue stretch at 837–931 (PKIRIPRHLK…ASIDIQIIDR (95 aa)) folds into the Ig-like C2-type 6 domain. Residues 934 to 1029 (PPQIVKIEDV…TKESAVIARD (96 aa)) enclose the Fibronectin type-III 3 domain. Residues 1047-1141 (PMFTQPLVNT…CKLEVKVIAQ (95 aa)) enclose the Ig-like C2-type 7 domain.

The protein belongs to the immunoglobulin superfamily. MyBP family. In terms of assembly, interacts with USP25 (isoform USP25m only); the interaction prevents proteasomal degradation of MYBPC1.

Functionally, thick filament-associated protein located in the crossbridge region of vertebrate striated muscle a bands. Slow skeletal protein that binds to both myosin and actin. In vitro, binds to native thin filaments and modifies the activity of actin-activated myosin ATPase. May modulate muscle contraction or may play a more structural role. This chain is Myosin-binding protein C, slow-type (MYBPC1), found in Homo sapiens (Human).